A 330-amino-acid polypeptide reads, in one-letter code: MESVAAESSPALENEHFQETPESNNSVYTSFMKSHRCYDLIPTSSKLVVFDTSLQVKKAFFALVTNGVRAAPLWDSKKQSFVGMLTITDFINILHRYYKSALVQIYELEEHKIETWREVYLQDSFKPLVCISPNASLFDAVSSLIRNKIHRLPVIDPESGNTLYILTHKRILKFLKLFITEFPKPEFMSKSLQELQIGTYANIAMVRTTTPVYVALGIFVQHRVSALPVVDEKGRVVDIYSKFDVINLAAEKTYNNLDVSVTKALQHRSHYFEGVLKCYLHETLETIINRLVEAEVHRLVVVDEHDVVKGIVSLSDILQALVLTGGEKKP.

The disordered stretch occupies residues 1–21; the sequence is MESVAAESSPALENEHFQETP. CBS domains follow at residues 42-102, 124-186, and 197-259; these read PTSS…KSAL, SFKP…PKPE, and IGTY…NLDV. ADP-binding positions include Arg69, 84–89, Val129, 150–151, and Lys169; these read MLTITD and HR. Residues Arg69, 84–89, Val129, His150, 150–151, Lys169, Thr199, Ala204, 225–226, and 241–244 contribute to the AMP site; these read MLTITD, HR, SA, and SKFD. ATP is bound by residues Arg69, 84–89, Val129, 150–151, Arg151, and Lys169; these read MLTITD and HR. The AMPK pseudosubstrate motif lies at 137 to 158; that stretch reads LFDAVSSLIRNKIHRLPVIDPE. Position 241 to 244 (241 to 244) interacts with ADP; it reads SKFD. 241–244 provides a ligand contact to ATP; sequence SKFD. The residue at position 260 (Ser260) is a Phosphoserine; by ULK1. Thr262 is subject to Phosphothreonine; by ULK1. Residue Arg268 coordinates ADP. Arg268 is an AMP binding site. Arg268 provides a ligand contact to ATP. Ser269 bears the Phosphoserine; by ULK1 mark. Positions 271–328 constitute a CBS 4 domain; the sequence is YFEGVLKCYLHETLETIINRLVEAEVHRLVVVDEHDVVKGIVSLSDILQALVLTGGEK. ADP-binding positions include Leu276 and 297–298; that span reads HR. AMP contacts are provided by residues Leu276, His297, 297–298, and 313–316; these read HR and SLSD. Residues Leu276 and 297-298 each bind ATP; that span reads HR.

This sequence belongs to the 5'-AMP-activated protein kinase gamma subunit family. In terms of assembly, AMPK is a heterotrimer of an alpha catalytic subunit (PRKAA1 or PRKAA2), a beta (PRKAB1 or PRKAB2) and a gamma non-catalytic subunits (PRKAG1, PRKAG2 or PRKAG3). Interacts with FNIP1 and FNIP2. In terms of processing, phosphorylated by ULK1 and ULK2; leading to negatively regulate AMPK activity and suggesting the existence of a regulatory feedback loop between ULK1, ULK2 and AMPK. Post-translationally, glycosylated; O-GlcNAcylated by OGT, promoting the AMP-activated protein kinase (AMPK) activity.

In terms of biological role, AMP/ATP-binding subunit of AMP-activated protein kinase (AMPK), an energy sensor protein kinase that plays a key role in regulating cellular energy metabolism. In response to reduction of intracellular ATP levels, AMPK activates energy-producing pathways and inhibits energy-consuming processes: inhibits protein, carbohydrate and lipid biosynthesis, as well as cell growth and proliferation. AMPK acts via direct phosphorylation of metabolic enzymes, and by longer-term effects via phosphorylation of transcription regulators. Also acts as a regulator of cellular polarity by remodeling the actin cytoskeleton; probably by indirectly activating myosin. Gamma non-catalytic subunit mediates binding to AMP, ADP and ATP, leading to activate or inhibit AMPK: AMP-binding results in allosteric activation of alpha catalytic subunit (PRKAA1 or PRKAA2) both by inducing phosphorylation and preventing dephosphorylation of catalytic subunits. ADP also stimulates phosphorylation, without stimulating already phosphorylated catalytic subunit. ATP promotes dephosphorylation of catalytic subunit, rendering the AMPK enzyme inactive. This Mus musculus (Mouse) protein is 5'-AMP-activated protein kinase subunit gamma-1 (Prkag1).